The chain runs to 361 residues: Chorismate synthase (361 aa).

NADP(+)-binding residues include Arg-48 and Arg-54. Residues 125-127 (RSS), 238-239 (NA), Gly-278, 293-297 (KPTSS), and Arg-319 contribute to the FMN site.

The protein belongs to the chorismate synthase family. Homotetramer. The cofactor is FMNH2.

The catalysed reaction is 5-O-(1-carboxyvinyl)-3-phosphoshikimate = chorismate + phosphate. Its pathway is metabolic intermediate biosynthesis; chorismate biosynthesis; chorismate from D-erythrose 4-phosphate and phosphoenolpyruvate: step 7/7. In terms of biological role, catalyzes the anti-1,4-elimination of the C-3 phosphate and the C-6 proR hydrogen from 5-enolpyruvylshikimate-3-phosphate (EPSP) to yield chorismate, which is the branch point compound that serves as the starting substrate for the three terminal pathways of aromatic amino acid biosynthesis. This reaction introduces a second double bond into the aromatic ring system. The chain is Chorismate synthase from Salmonella arizonae (strain ATCC BAA-731 / CDC346-86 / RSK2980).